A 438-amino-acid chain; its full sequence is Aflatoxin cluster transcriptional coactivator aflS (438 aa).

The HTH iclR-type domain maps to 65–134; sequence LALYNQLLAC…PSPGHVAHSV (70 aa). Positions 95–114 form a DNA-binding region, H-T-H motif; it reads FEDVADIAGVPECRLRRLVR.

Interacts with aflR.

The protein resides in the nucleus. The protein localises to the endosome. Its function is as follows. Transcription coactivator involved in regulation of the aflatoxin biosynthesis gene cluster with aflR. The ratio of the expression data between aflS:aflR plays a crucial role in the regulation of aflatoxins production. A high ratio, produced at a range between 17 and 30 degrees Celsius, corresponds with the production profile of aflatoxin G1 biosynthesis. A low ratio, produced over 30 degrees Celsius, is related to aflatoxin B1 biosynthesis. AflJ may act in aflR transport to or from the nucleus, thus controlling the availability of aflR for transcriptional activation of aflatoxin biosynthesis cluster genes. AflJ may also assist in directing endosomes to the cytoplasmic membrane for aflatoxin export. The sequence is that of Aflatoxin cluster transcriptional coactivator aflS from Aspergillus parasiticus (strain ATCC 56775 / NRRL 5862 / SRRC 143 / SU-1).